Reading from the N-terminus, the 396-residue chain is Ribosomal RNA large subunit methyltransferase I (396 aa).

The PUA domain occupies 2–79 (AVRIKLKPGR…REEEIDREFF (78 aa)).

Belongs to the methyltransferase superfamily. RlmI family.

It localises to the cytoplasm. The enzyme catalyses cytidine(1962) in 23S rRNA + S-adenosyl-L-methionine = 5-methylcytidine(1962) in 23S rRNA + S-adenosyl-L-homocysteine + H(+). Its function is as follows. Specifically methylates the cytosine at position 1962 (m5C1962) of 23S rRNA. The protein is Ribosomal RNA large subunit methyltransferase I of Shewanella sp. (strain ANA-3).